We begin with the raw amino-acid sequence, 405 residues long: Sialic acid transporter NanX (405 aa).

Over 1-20 the chain is Cytoplasmic; the sequence is MATAWYKQVNPPQRKALFSA. Residues 21-41 form a helical membrane-spanning segment; it reads WLGYVFDGFDFMMIFYILHII. The Periplasmic portion of the chain corresponds to 42–53; the sequence is KADLGITDIQAT. A helical membrane pass occupies residues 54–74; sequence LIGTVAFIARPIGGGFFGAMA. Over 75 to 80 the chain is Cytoplasmic; sequence DKYGRK. Residues 81–101 traverse the membrane as a helical segment; that stretch reads PMMMWAIFIYSVGTGLSGIAT. Asn102 is a topological domain (periplasmic). A helical transmembrane segment spans residues 103–123; the sequence is LYMLAVCRFIVGLGMSGEYAC. Residues 124–139 are Cytoplasmic-facing; it reads ASTYAVESWPKNLQSK. Residues 140–160 form a helical membrane-spanning segment; sequence ASAFLVSGFSVGNIIAAQIIP. The Periplasmic segment spans residues 161 to 164; the sequence is QFAE. The chain crosses the membrane as a helical span at residues 165–185; that stretch reads VYGWRNSFFIGLLPVLLVLWI. The Cytoplasmic portion of the chain corresponds to 186–214; it reads RKSAPESQEWIEDKYKDKSTFLSVFRKPH. A helical transmembrane segment spans residues 215–235; it reads LSISMIVFLVCFCLFGANWPI. The Periplasmic segment spans residues 236–250; that stretch reads NGLLPSYLADNGVNT. A helical membrane pass occupies residues 251-271; sequence VVISTLMTIAGLGTLTGTIFF. At 272-282 the chain is on the cytoplasmic side; that stretch reads GFVGDKIGVKK. The helical transmembrane segment at 283–303 threads the bilayer; the sequence is AFVVGLITSFIFLCPLFFISV. Over 304 to 307 the chain is Periplasmic; it reads KNSS. Residues 308-328 form a helical membrane-spanning segment; that stretch reads LIGLCLFGLMFTNLGIAGLVP. Topologically, residues 329-344 are cytoplasmic; that stretch reads KFIYDYFPTKLRGLGT. The chain crosses the membrane as a helical span at residues 345–365; that stretch reads GLIYNLGATGGMAAPVLATYI. The Periplasmic segment spans residues 366–371; it reads SGYYGL. The helical transmembrane segment at 372–392 threads the bilayer; sequence GVSLFIVTVAFSALLILLVGF. At 393–405 the chain is on the cytoplasmic side; it reads DIPGKIYKLSVAK.

It belongs to the major facilitator superfamily. Sugar transporter (TC 2.A.1.1) family.

It is found in the cell inner membrane. Probably transports across the inner membrane the two dehydrated forms of N-acetylneuraminate (Neu5Ac), 2,7-anhydro-N-acetylneuraminate (2,7-AN) and 2-deoxy-2,3-didehydro-N-acetylneuraminate (2,3-EN). The protein is Sialic acid transporter NanX of Escherichia coli (strain K12).